We begin with the raw amino-acid sequence, 124 residues long: Cytochrome c2 (124 aa).

The residue at position 1 (Q1) is a Pyrrolidone carboxylic acid. Heme c is bound by residues C15, C18, H19, and M100.

In terms of processing, binds 1 heme c group covalently per subunit.

It is found in the periplasm. In terms of biological role, cytochrome c2 is found mainly in purple, non-sulfur, photosynthetic bacteria where it functions as the electron donor to the oxidized bacteriochlorophyll in the photophosphorylation pathway. However, it may also have a role in the respiratory chain and is found in some non-photosynthetic bacteria. This Cereibacter sphaeroides (Rhodobacter sphaeroides) protein is Cytochrome c2 (cycA).